We begin with the raw amino-acid sequence, 408 residues long: COP9 signalosome complex subunit 4 (408 aa).

Positions 194–374 (RIQDARRRFL…GIIYFESNTT (181 aa)) constitute a PCI domain.

This sequence belongs to the CSN4 family. As to quaternary structure, component of the COP9 signalosome (CSN) complex.

Its subcellular location is the cytoplasm. It localises to the nucleus. Its function is as follows. Component of the COP9 signalosome (CSN) complex that acts as an regulator of the ubiquitin (Ubl) conjugation pathway by mediating the deneddylation of the cullin subunit of SCF-type E3 ubiquitin-protein ligase complexes. The CSN complex seems to link protein degradation to sexual development. Required for fruit body formation. In Emericella nidulans (strain FGSC A4 / ATCC 38163 / CBS 112.46 / NRRL 194 / M139) (Aspergillus nidulans), this protein is COP9 signalosome complex subunit 4 (csnD).